The primary structure comprises 23 residues: Hemocyanin subunit 1 (23 aa).

Residues 1–23 (DSPGGASDTQKQHXVNSXXXKXY) are disordered.

The protein belongs to the tyrosinase family. Hemocyanin subfamily. As to expression, hemolymph.

It localises to the secreted. It is found in the extracellular space. Its function is as follows. Hemocyanins are copper-containing oxygen carriers occurring freely dissolved in the hemolymph of many mollusks and arthropods. The sequence is that of Hemocyanin subunit 1 from Cancer pagurus (Rock crab).